The primary structure comprises 650 residues: DNA gyrase subunit B (650 aa).

In terms of domain architecture, Toprim spans 429-543 (NELFIVEGDS…AGYVYIAQPP (115 aa)). Mg(2+) contacts are provided by Glu-435, Asp-508, and Asp-510.

This sequence belongs to the type II topoisomerase GyrB family. As to quaternary structure, heterotetramer, composed of two GyrA and two GyrB chains. In the heterotetramer, GyrA contains the active site tyrosine that forms a transient covalent intermediate with DNA, while GyrB binds cofactors and catalyzes ATP hydrolysis. Mg(2+) serves as cofactor. Requires Mn(2+) as cofactor. It depends on Ca(2+) as a cofactor.

The protein localises to the cytoplasm. It carries out the reaction ATP-dependent breakage, passage and rejoining of double-stranded DNA.. In terms of biological role, a type II topoisomerase that negatively supercoils closed circular double-stranded (ds) DNA in an ATP-dependent manner to modulate DNA topology and maintain chromosomes in an underwound state. Negative supercoiling favors strand separation, and DNA replication, transcription, recombination and repair, all of which involve strand separation. Also able to catalyze the interconversion of other topological isomers of dsDNA rings, including catenanes and knotted rings. Type II topoisomerases break and join 2 DNA strands simultaneously in an ATP-dependent manner. In Streptococcus pyogenes serotype M1, this protein is DNA gyrase subunit B.